A 34-amino-acid chain; its full sequence is Photosystem II reaction center protein Y (34 aa).

Residues 1–4 (MDIR) lie on the Lumenal side of the membrane. Residues 5–23 (LLIVLLPVLAAASWALYNI) form a helical membrane-spanning segment. Residues 24–34 (GRVALQQFRSM) are Stromal-facing.

Belongs to the PsbY family. PSII is composed of 1 copy each of membrane proteins PsbA, PsbB, PsbC, PsbD, PsbE, PsbF, PsbH, PsbI, PsbJ, PsbK, PsbL, PsbM, PsbT, PsbX, PsbY, PsbZ, Psb30/Ycf12, at least 3 peripheral proteins of the oxygen-evolving complex and a large number of cofactors. It forms dimeric complexes.

The protein resides in the plastid. It localises to the chloroplast thylakoid membrane. Its function is as follows. Loosely associated component of the core of photosystem II (PSII), it is not always seen in crystals. PSII is a light-driven water plastoquinone oxidoreductase, using light energy to abstract electrons from H(2)O, generating a proton gradient subsequently used for ATP formation. The protein is Photosystem II reaction center protein Y of Gracilaria tenuistipitata var. liui (Red alga).